The following is a 364-amino-acid chain: Transcription factor SPEECHLESS (364 aa).

Residues 35 to 109 (GEISPTAAST…QKMSHVTVER (75 aa)) form a disordered region. Ser-38 is modified (phosphoserine; by ASK7). Position 40 is a phosphothreonine; by ASK7 (Thr-40). The span at 40 to 53 (TAASTPKDGTTSSK) shows a compositional bias: polar residues. At Ser-43 the chain carries Phosphoserine; by ASK7. Position 44 is a phosphothreonine; by ASK7 (Thr-44). Ser-65 carries the post-translational modification Phosphoserine; by ASK7. A compositionally biased stretch (acidic residues) spans 79–92 (EDEEEEDGDGEAEE). The basic motif stretch occupies residues 99 to 112 (QQKMSHVTVERNRR). One can recognise a bHLH domain in the interval 99 to 150 (QQKMSHVTVERNRRKQMNEHLTVLRSLMPCFYVKRGDQASIIGGVVEYISEL). The tract at residues 113–150 (KQMNEHLTVLRSLMPCFYVKRGDQASIIGGVVEYISEL) is helix-loop-helix motif. The residue at position 171 (Ser-171) is a Phosphoserine; by ASK7. The segment at 171–227 (SPRVVPSPRPSPPVLSPRKPPLSPRINHHQIHHHLLLPPISPRTPQPTSPYRAIPPQ) is disordered. Residues 175–193 (VPSPRPSPPVLSPRKPPLS) show a composition bias toward pro residues. The residue at position 177 (Ser-177) is a Phosphoserine; by ASK7, MPK3 and MPK6. Ser-181 carries the post-translational modification Phosphoserine; by ASK7. Ser-186 bears the Phosphoserine; by CDKA-1, ASK7, MPK3 and MPK6 mark. Ser-193 carries the post-translational modification Phosphoserine; by MPK3 and MPK6. Positions 196–205 (INHHQIHHHL) are enriched in basic residues. Over residues 209-218 (PISPRTPQPT) the composition is skewed to pro residues. Ser-211 carries the post-translational modification Phosphoserine; by MPK3 and MPK6. A Phosphothreonine; by ASK7, MPK3 and MPK6 modification is found at Thr-214. Residue Ser-219 is modified to Phosphoserine; by ASK7, MPK3 and MPK6.

Homodimer. Forms dimers with SCRM and SCRM2. May interact with CDKA-1. In terms of processing, phosphorylated by ASK7/BIN2 and ASK3/SK12; this post-translational modification inhibits activity and limit epidermal cell proliferation. Phosphorylation by MPK3 and MPK6 leads to the inhibition of stomatal fate and to degradation. Stabilized by CDKA-1-mediated phosphorylation at Ser-186 which promotes stomatal development. In terms of tissue distribution, expressed in developing leaf epidermis. Reduced accumulation in the stomatal lineage ground cells (SLGCs) where BASL is polarized in the cell cortex. Observed in small cells of non-protruding hypocotyl cell files and of developing cotyledon epidermis. Restricted to meristemoids (stomatal precursor cell) in leaves epidermis, mostly in dividing cells of non-protruding cell files.

Its subcellular location is the nucleus. With respect to regulation, negatively regulated through phosphorylation by the MAPK module. Activity is constrained by polarized BASL in stomatal lineage ground cells (SLGCs) undergoing ACD. Transcription factor acting as an integration node for stomata and brassinosteroid (BR) signaling pathways to control stomatal initiation and development. Activates transcription when in the presence of SCRM/ICE1. Functions as a dimer with SCRM or SCRM2 during stomatal initiation. Required for the initiation, the spacing and the formation of stomata, by promoting the first asymmetric cell divisions. Together with FMA and MUTE, modulates the stomata formation. Involved in the regulation of growth reduction under osmotic stress (e.g. mannitol), associated with a quick decrease of meristemoid mother cells (MMCs) number lower stomatal index and density. This is Transcription factor SPEECHLESS from Arabidopsis thaliana (Mouse-ear cress).